We begin with the raw amino-acid sequence, 205 residues long: Type III pantothenate kinase (205 aa).

Asp-5 to His-12 lines the ATP pocket. Residues Tyr-68 and Gly-72–Arg-75 contribute to the substrate site. Residue Asp-74 is the Proton acceptor of the active site. Asp-89 serves as a coordination point for K(+). ATP is bound at residue Ser-92. Ser-144 provides a ligand contact to substrate.

This sequence belongs to the type III pantothenate kinase family. As to quaternary structure, homodimer. It depends on NH4(+) as a cofactor. K(+) serves as cofactor.

The protein resides in the cytoplasm. It carries out the reaction (R)-pantothenate + ATP = (R)-4'-phosphopantothenate + ADP + H(+). It participates in cofactor biosynthesis; coenzyme A biosynthesis; CoA from (R)-pantothenate: step 1/5. In terms of biological role, catalyzes the phosphorylation of pantothenate (Pan), the first step in CoA biosynthesis. The protein is Type III pantothenate kinase of Sulfurimonas denitrificans (strain ATCC 33889 / DSM 1251) (Thiomicrospira denitrificans (strain ATCC 33889 / DSM 1251)).